Here is a 234-residue protein sequence, read N- to C-terminus: Probable cyclic nucleotide phosphodiesterase Rmag_0669 (234 aa).

Residues aspartate 11, histidine 13, aspartate 49, asparagine 79, histidine 145, histidine 184, and histidine 186 each coordinate Fe cation. AMP contacts are provided by residues histidine 13, aspartate 49, and asparagine 79–histidine 80. Residue histidine 186 coordinates AMP.

It belongs to the cyclic nucleotide phosphodiesterase class-III family. Fe(2+) is required as a cofactor.

The chain is Probable cyclic nucleotide phosphodiesterase Rmag_0669 from Ruthia magnifica subsp. Calyptogena magnifica.